A 224-amino-acid polypeptide reads, in one-letter code: MGALYNEDYDATDMTETRLLAIPLQAYVYRTFSNVMRSASEHLDDKYAQEAHEESETIRAHWEALETRYEVPDWSKEDFDVSEGITNVDTAVRLAESAERFVRQTNLELSANQLLRLLHYRSMQERQWELETRSYLNDLINLVEDPADQKRIDDVLMPWFANKPFMVELTTEELTQLRKKIEDAIKNTNVQKSARQALKKYPLLSTFSSNGSRRGRSNKHRVVH.

Plasmid partition require REP1, REP2, and a cis-acting DNA sequence (known as STB). REP1 may act by intercalating in the yeast nuclear matrix and binding STB either directly or via REP2. In Lachancea fermentati (Zygosaccharomyces fermentati), this protein is Trans-acting factor B (B).